Consider the following 141-residue polypeptide: Large ribosomal subunit protein uL11 (141 aa).

The protein belongs to the universal ribosomal protein uL11 family. Part of the ribosomal stalk of the 50S ribosomal subunit. Interacts with L10 and the large rRNA to form the base of the stalk. L10 forms an elongated spine to which L12 dimers bind in a sequential fashion forming a multimeric L10(L12)X complex. In terms of processing, one or more lysine residues are methylated.

Its function is as follows. Forms part of the ribosomal stalk which helps the ribosome interact with GTP-bound translation factors. This is Large ribosomal subunit protein uL11 from Helicobacter pylori (strain P12).